The chain runs to 125 residues: Fluoride-specific ion channel FluC (125 aa).

The next 4 helical transmembrane spans lie at 4–24, 35–55, 68–88, and 100–120; these read IALVATGGAIGSVFRYLVGVW, WGTLAVNIVGSFLIGLLVELV, FLVTGVLGGFTTFSSFSLDAV, and AFYILASLVVSIAAVFAGLAL. Na(+) contacts are provided by glycine 75 and threonine 78.

Belongs to the fluoride channel Fluc/FEX (TC 1.A.43) family.

It localises to the cell inner membrane. The enzyme catalyses fluoride(in) = fluoride(out). Its activity is regulated as follows. Na(+) is not transported, but it plays an essential structural role and its presence is essential for fluoride channel function. Its function is as follows. Fluoride-specific ion channel. Important for reducing fluoride concentration in the cell, thus reducing its toxicity. The chain is Fluoride-specific ion channel FluC from Agrobacterium fabrum (strain C58 / ATCC 33970) (Agrobacterium tumefaciens (strain C58)).